Reading from the N-terminus, the 291-residue chain is GTPase Era (291 aa).

Positions 2–167 (KSGFVSIIGR…LDEIVKCLNE (166 aa)) constitute an Era-type G domain. A G1 region spans residues 10–17 (GRTNAGKS). 10–17 (GRTNAGKS) serves as a coordination point for GTP. The interval 36-40 (NATRR) is G2. The G3 stretch occupies residues 57 to 60 (DTPG). GTP is bound by residues 57–61 (DTPGL) and 116–119 (NKVD). The interval 116-119 (NKVD) is G4. The interval 146-148 (YSS) is G5. The region spanning 186 to 274 (YRDFILESIY…LLKLFVTVKK (89 aa)) is the KH type-2 domain.

Belongs to the TRAFAC class TrmE-Era-EngA-EngB-Septin-like GTPase superfamily. Era GTPase family. As to quaternary structure, monomer.

It is found in the cytoplasm. The protein localises to the cell inner membrane. Functionally, an essential GTPase that binds both GDP and GTP, with rapid nucleotide exchange. Plays a role in 16S rRNA processing and 30S ribosomal subunit biogenesis and possibly also in cell cycle regulation and energy metabolism. The chain is GTPase Era from Campylobacter jejuni subsp. doylei (strain ATCC BAA-1458 / RM4099 / 269.97).